We begin with the raw amino-acid sequence, 251 residues long: MLTKRIIPCLDVTAGRVVKGVNFVSLTDVGDPVEIAKAYNEAGADELVFLDITATVELRQTMIDVVERTAEQVFIPLTVGGGISSVADMKELLQAGADKISLNSAAIKRPELIQEGAKKFGNQCIVVAIDAKWNGTNWHVFTRGGREDTGLDAVKWAKKAVGLGAGEILLTSMDGDGTKNGYDIPLTKAISEAVSVPVIASGGCGNANHMVEVFEQTSATAALAASIFHYGELSITHVKNTLLEKGVNIRP.

Catalysis depends on residues Asp-11 and Asp-130.

The protein belongs to the HisA/HisF family. In terms of assembly, heterodimer of HisH and HisF.

The protein resides in the cytoplasm. It catalyses the reaction 5-[(5-phospho-1-deoxy-D-ribulos-1-ylimino)methylamino]-1-(5-phospho-beta-D-ribosyl)imidazole-4-carboxamide + L-glutamine = D-erythro-1-(imidazol-4-yl)glycerol 3-phosphate + 5-amino-1-(5-phospho-beta-D-ribosyl)imidazole-4-carboxamide + L-glutamate + H(+). The protein operates within amino-acid biosynthesis; L-histidine biosynthesis; L-histidine from 5-phospho-alpha-D-ribose 1-diphosphate: step 5/9. In terms of biological role, IGPS catalyzes the conversion of PRFAR and glutamine to IGP, AICAR and glutamate. The HisF subunit catalyzes the cyclization activity that produces IGP and AICAR from PRFAR using the ammonia provided by the HisH subunit. The chain is Imidazole glycerol phosphate synthase subunit HisF from Listeria welshimeri serovar 6b (strain ATCC 35897 / DSM 20650 / CCUG 15529 / CIP 8149 / NCTC 11857 / SLCC 5334 / V8).